Here is a 178-residue protein sequence, read N- to C-terminus: Enhancer of split m5 protein (178 aa).

The 56-residue stretch at 18–73 folds into the bHLH domain; sequence YLKVKKPLLERQRRARMNKCLDTLKTLVAEFQGDDAILRMDKAEMLEAALVFMRKQ. Residues 89–122 enclose the Orange domain; the sequence is FKNGYMNAVSEISRVMACTPAMSVDVGKTVMTHL. Residues 135 to 165 are compositionally biased toward polar residues; the sequence is VQTSVTTSTPRPLSPASSGYHSDNEDSQSAA. The disordered stretch occupies residues 135–178; the sequence is VQTSVTTSTPRPLSPASSGYHSDNEDSQSAASPKPVEETMWRPW. Residues 169-178 are compositionally biased toward basic and acidic residues; that stretch reads PVEETMWRPW. Residues 175–178 carry the WRPW motif motif; it reads WRPW.

Transcription repression requires formation of a complex with a corepressor protein (Groucho). Forms homodimers.

Its subcellular location is the nucleus. Its function is as follows. Participates in the control of cell fate choice by uncommitted neuroectodermal cells in the embryo. Transcriptional repressor. Binds DNA on N-box motifs: 5'-CACNAG-3'. The sequence is that of Enhancer of split m5 protein from Drosophila melanogaster (Fruit fly).